The following is a 491-amino-acid chain: Chromosomal replication initiator protein DnaA (491 aa).

The segment at 1 to 69 is domain I, interacts with DnaA modulators; that stretch reads MTTWDKCLKK…TIQECHGNDL (69 aa). The domain II stretch occupies residues 69–154; sequence LIIEYSNKKF…KEDEEYSFGL (86 aa). Residues 155–371 are domain III, AAA+ region; sequence PLKEKYVFDS…GALNRVLTTS (217 aa). ATP contacts are provided by Gly-199, Gly-201, Lys-202, and Thr-203. The domain IV, binds dsDNA stretch occupies residues 372-491; that stretch reads KFNHKDPTIE…YELLLNKISR (120 aa).

It belongs to the DnaA family. In terms of assembly, oligomerizes as a right-handed, spiral filament on DNA at oriC.

Its subcellular location is the cytoplasm. Plays an essential role in the initiation and regulation of chromosomal replication. ATP-DnaA binds to the origin of replication (oriC) to initiate formation of the DNA replication initiation complex once per cell cycle. Binds the DnaA box (a 9 base pair repeat at the origin) and separates the double-stranded (ds)DNA. Forms a right-handed helical filament on oriC DNA; dsDNA binds to the exterior of the filament while single-stranded (ss)DNA is stabiized in the filament's interior. The ATP-DnaA-oriC complex binds and stabilizes one strand of the AT-rich DNA unwinding element (DUE), permitting loading of DNA polymerase. After initiation quickly degrades to an ADP-DnaA complex that is not apt for DNA replication. Binds acidic phospholipids. The polypeptide is Chromosomal replication initiator protein DnaA (Francisella tularensis subsp. tularensis (strain WY96-3418)).